The following is a 301-amino-acid chain: Acetylglutamate kinase (301 aa).

Substrate-binding positions include 71 to 72 (GG), Arg93, and Asn198.

Belongs to the acetylglutamate kinase family. ArgB subfamily.

The protein resides in the cytoplasm. The catalysed reaction is N-acetyl-L-glutamate + ATP = N-acetyl-L-glutamyl 5-phosphate + ADP. It participates in amino-acid biosynthesis; L-arginine biosynthesis; N(2)-acetyl-L-ornithine from L-glutamate: step 2/4. In terms of biological role, catalyzes the ATP-dependent phosphorylation of N-acetyl-L-glutamate. In Rhizorhabdus wittichii (strain DSM 6014 / CCUG 31198 / JCM 15750 / NBRC 105917 / EY 4224 / RW1) (Sphingomonas wittichii), this protein is Acetylglutamate kinase.